The sequence spans 173 residues: Spermidine N(1)-acetyltransferase (173 aa).

The N-acetyltransferase domain occupies Leu-5–Tyr-162. Residues Met-28, Glu-33, Glu-41, and His-49–Asp-52 each bind spermine. Glu-33 contributes to the Mg(2+) binding site. Positions 33 and 41 each coordinate spermidine. Residue Glu-75 coordinates Mg(2+). Glu-84 to Gln-86 lines the spermine pocket. Residues Ile-87–Ile-89, Gln-94–Arg-100, and Asn-127–Glu-136 each bind acetyl-CoA. Catalysis depends on Tyr-134, which acts as the Proton donor.

Belongs to the acetyltransferase family. In terms of assembly, homododecamer; dimer of hexamers. Exists in solution in a variety of protein homooligomeric states including dodecamers in an open state. The presence of the polyamines spermidine or spermine shifts the equilibrium to dodecamers and induces the formation of the closed, symmetric dodecamers.

Its subcellular location is the cytoplasm. The enzyme catalyses an alkane-alpha,omega-diamine + acetyl-CoA = an N-acetylalkane-alpha,omega-diamine + CoA + H(+). It carries out the reaction spermidine + acetyl-CoA = N(1)-acetylspermidine + CoA + H(+). It catalyses the reaction spermidine + acetyl-CoA = N(8)-acetylspermidine + CoA + H(+). The catalysed reaction is spermine + acetyl-CoA = N(1)-acetylspermine + CoA + H(+). It functions in the pathway amine and polyamine degradation; spermidine degradation. Its pathway is amine and polyamine degradation; spermine degradation. Its activity is regulated as follows. Allosterically regulated by polyamines. Polyamines trigger conformational changes and induce the symmetric closed dodecameric state of the protein when they bind to their allosteric sites. In terms of biological role, involved in the protection against polyamine toxicity by regulating their concentration. Catalyzes the transfer of an acetyl group from acetyl coenzyme A (AcCoA) to the primary amino groups of spermidine to yield N(1)- and N(8)-acetylspermidine. It can use polyamines such as spermine and N(1)-acetylspermine, but not putrescine or cadaverine. This Vibrio cholerae serotype O1 (strain ATCC 39315 / El Tor Inaba N16961) protein is Spermidine N(1)-acetyltransferase (speG).